Consider the following 120-residue polypeptide: NAD(P)H-quinone oxidoreductase subunit 3, chloroplastic (120 aa).

A run of 3 helical transmembrane segments spans residues 3-23, 64-84, and 89-109; these read ILEG…IPVI, MFAL…PWAV, and LGLS…IGLV.

Belongs to the complex I subunit 3 family. In terms of assembly, NDH is composed of at least 16 different subunits, 5 of which are encoded in the nucleus.

The protein localises to the plastid. It localises to the chloroplast thylakoid membrane. The catalysed reaction is a plastoquinone + NADH + (n+1) H(+)(in) = a plastoquinol + NAD(+) + n H(+)(out). It catalyses the reaction a plastoquinone + NADPH + (n+1) H(+)(in) = a plastoquinol + NADP(+) + n H(+)(out). Its function is as follows. NDH shuttles electrons from NAD(P)H:plastoquinone, via FMN and iron-sulfur (Fe-S) centers, to quinones in the photosynthetic chain and possibly in a chloroplast respiratory chain. The immediate electron acceptor for the enzyme in this species is believed to be plastoquinone. Couples the redox reaction to proton translocation, and thus conserves the redox energy in a proton gradient. This is NAD(P)H-quinone oxidoreductase subunit 3, chloroplastic from Nephroselmis olivacea (Green alga).